The chain runs to 173 residues: Bifunctional protein PyrR (173 aa).

The PRPP-binding signature appears at I93–T105.

Belongs to the purine/pyrimidine phosphoribosyltransferase family. PyrR subfamily. Homodimer and homohexamer; in equilibrium.

It catalyses the reaction UMP + diphosphate = 5-phospho-alpha-D-ribose 1-diphosphate + uracil. Functionally, regulates transcriptional attenuation of the pyrimidine nucleotide (pyr) operon by binding in a uridine-dependent manner to specific sites on pyr mRNA. This disrupts an antiterminator hairpin in the RNA and favors formation of a downstream transcription terminator, leading to a reduced expression of downstream genes. Its function is as follows. Also displays a weak uracil phosphoribosyltransferase activity which is not physiologically significant. The polypeptide is Bifunctional protein PyrR (Streptococcus equi subsp. zooepidemicus (strain MGCS10565)).